Consider the following 116-residue polypeptide: Toxin CSTX-10 (116 aa).

The first 20 residues, Met-1–Ala-20, serve as a signal peptide directing secretion. The propeptide occupies Glu-21–Arg-47. Disulfide bonds link Cys-53–Cys-68, Cys-60–Cys-77, Cys-67–Cys-94, and Cys-79–Cys-92.

As to expression, expressed by the venom gland.

It localises to the secreted. The protein localises to the target cell membrane. Functionally, spider venom toxin that shows calcium channel blocking activity and exhibits cytolytic activity by affecting the outer leaflet curvature and/or pore formation across the membrane. It blocks L-type calcium channels (Cav1/CACNA1) in mammalian neurons at nanomolar concentrations. Furthermore, it produces a slow voltage-independent block of mid/low and high voltage-activated calcium channels in cockroach neurons. Potassium ions, histamine, M-ctenitoxin-Cs1a (AC P83619), CSTX-9 (AC P58604), and CSTX-13 (AC P83919) synergistically increase the insecticidal activity of this toxin. In vivo, it causes paralysis in blow flies and provokes death in drosophila. The protein is Toxin CSTX-10 of Cupiennius salei (American wandering spider).